The sequence spans 329 residues: tRNA(Ile)-lysidine synthase (329 aa).

37–42 (SGGSDS) lines the ATP pocket.

The protein belongs to the tRNA(Ile)-lysidine synthase family.

It localises to the cytoplasm. It carries out the reaction cytidine(34) in tRNA(Ile2) + L-lysine + ATP = lysidine(34) in tRNA(Ile2) + AMP + diphosphate + H(+). Ligates lysine onto the cytidine present at position 34 of the AUA codon-specific tRNA(Ile) that contains the anticodon CAU, in an ATP-dependent manner. Cytidine is converted to lysidine, thus changing the amino acid specificity of the tRNA from methionine to isoleucine. This Zymomonas mobilis subsp. mobilis (strain ATCC 31821 / ZM4 / CP4) protein is tRNA(Ile)-lysidine synthase.